The following is a 204-amino-acid chain: Holliday junction branch migration complex subunit RuvA (204 aa).

Residues 1-64 (MIGRLQGILL…EDAHLLFGFS (64 aa)) form a domain I region. A domain II region spans residues 65 to 143 (AKTDRTLFRE…GIKQPDFFVE (79 aa)). The interval 144–155 (SSHVGAVDPVTT) is flexible linker. The domain III stretch occupies residues 156–204 (SPEVPAEEAVAALMALGYKASDAEKMVKRIAKPHLTSEQLIREALKAAL).

This sequence belongs to the RuvA family. Homotetramer. Forms an RuvA(8)-RuvB(12)-Holliday junction (HJ) complex. HJ DNA is sandwiched between 2 RuvA tetramers; dsDNA enters through RuvA and exits via RuvB. An RuvB hexamer assembles on each DNA strand where it exits the tetramer. Each RuvB hexamer is contacted by two RuvA subunits (via domain III) on 2 adjacent RuvB subunits; this complex drives branch migration. In the full resolvosome a probable DNA-RuvA(4)-RuvB(12)-RuvC(2) complex forms which resolves the HJ.

The protein localises to the cytoplasm. Functionally, the RuvA-RuvB-RuvC complex processes Holliday junction (HJ) DNA during genetic recombination and DNA repair, while the RuvA-RuvB complex plays an important role in the rescue of blocked DNA replication forks via replication fork reversal (RFR). RuvA specifically binds to HJ cruciform DNA, conferring on it an open structure. The RuvB hexamer acts as an ATP-dependent pump, pulling dsDNA into and through the RuvAB complex. HJ branch migration allows RuvC to scan DNA until it finds its consensus sequence, where it cleaves and resolves the cruciform DNA. The polypeptide is Holliday junction branch migration complex subunit RuvA (Mannheimia succiniciproducens (strain KCTC 0769BP / MBEL55E)).